A 312-amino-acid polypeptide reads, in one-letter code: Glyoxylate/hydroxypyruvate reductase A (312 aa).

Arginine 227 is an active-site residue. The active-site Proton donor is histidine 275.

It belongs to the D-isomer specific 2-hydroxyacid dehydrogenase family. GhrA subfamily.

Its subcellular location is the cytoplasm. It carries out the reaction glycolate + NADP(+) = glyoxylate + NADPH + H(+). It catalyses the reaction (R)-glycerate + NAD(+) = 3-hydroxypyruvate + NADH + H(+). The catalysed reaction is (R)-glycerate + NADP(+) = 3-hydroxypyruvate + NADPH + H(+). Catalyzes the NADPH-dependent reduction of glyoxylate and hydroxypyruvate into glycolate and glycerate, respectively. In Escherichia coli O81 (strain ED1a), this protein is Glyoxylate/hydroxypyruvate reductase A.